The chain runs to 74 residues: STKNGRDSNSKRLGVKVYGNQPVKAGGIMIRQRGLTFKPGISVSVGKDYTLFATQNGYVQFETINDKKFVSVVG.

Belongs to the bacterial ribosomal protein bL27 family.

The protein localises to the plastid. It localises to the chloroplast. The polypeptide is Large ribosomal subunit protein bL27c (rpl27) (Calyptrosphaera sphaeroidea).